Reading from the N-terminus, the 476-residue chain is tRNA (cytosine(72)-C(5))-methyltransferase NSUN6 (476 aa).

Residues 111-203 (QGEVIVGAQC…IGIRMTEPIY (93 aa)) form the PUA domain. S-adenosyl-L-methionine contacts are provided by residues 242-248 (CAAPGGK), D266, D293, and D323. C373 acts as the Nucleophile in catalysis. K419 is modified (N6-acetyllysine).

This sequence belongs to the class I-like SAM-binding methyltransferase superfamily. RsmB/NOP family.

The protein resides in the cytoplasm. The enzyme catalyses cytidine(72) in tRNA(Thr) + S-adenosyl-L-methionine = 5-methylcytidine(72) in tRNA(Thr) + S-adenosyl-L-homocysteine + H(+). It catalyses the reaction cytidine(72) in tRNA(Cys) + S-adenosyl-L-methionine = 5-methylcytidine(72) in tRNA(Cys) + S-adenosyl-L-homocysteine + H(+). Its function is as follows. S-adenosyl-L-methionine-dependent methyltransferase that specifically methylates the C5 position of cytosine 72 in tRNA(Thr)(TGT) and tRNA(Cys)(GCA). In vitro also methylates tRNA(Thr)(AGT). Methylation requires, in the acceptor stem region, the presence of the 3'-CCA terminus, the target site C72, the discriminator base U73, and the second and third base pairs (2:71 and 3:70) in the tRNA substrates. In Mus musculus (Mouse), this protein is tRNA (cytosine(72)-C(5))-methyltransferase NSUN6.